Consider the following 363-residue polypeptide: Melanoma-associated antigen B16 (363 aa).

Residues 33–124 (EPCSSPHLMA…PDQSDSTDLP (92 aa)) form a disordered region. A compositionally biased stretch (low complexity) spans 82–97 (ASTSSDLQHPYDSSSE). An MAGE domain is found at 128 to 327 (VDGKVDFLVN…TVFLSQYEEA (200 aa)). Positions 342–363 (HADSSSTSGESSSDTSSNFSQV) are disordered.

The chain is Melanoma-associated antigen B16 (Mageb16) from Mus musculus (Mouse).